The chain runs to 420 residues: Glutamyl-tRNA reductase (420 aa).

Substrate contacts are provided by residues 49–52 (TCNR), Ser-109, 114–116 (EPQ), and Gln-120. The Nucleophile role is filled by Cys-50. 189–194 (GAGETI) is a binding site for NADP(+).

The protein belongs to the glutamyl-tRNA reductase family. In terms of assembly, homodimer.

It catalyses the reaction (S)-4-amino-5-oxopentanoate + tRNA(Glu) + NADP(+) = L-glutamyl-tRNA(Glu) + NADPH + H(+). Its pathway is porphyrin-containing compound metabolism; protoporphyrin-IX biosynthesis; 5-aminolevulinate from L-glutamyl-tRNA(Glu): step 1/2. Catalyzes the NADPH-dependent reduction of glutamyl-tRNA(Glu) to glutamate 1-semialdehyde (GSA). In Yersinia enterocolitica serotype O:8 / biotype 1B (strain NCTC 13174 / 8081), this protein is Glutamyl-tRNA reductase.